The following is a 362-amino-acid chain: 3-dehydroquinate synthase (362 aa).

NAD(+) is bound by residues 70–75, 104–108, 128–129, lysine 141, lysine 150, and 168–171; these read DGEKYK, GVIGD, TT, and TLNT. Zn(2+) contacts are provided by glutamate 183, histidine 246, and histidine 263.

The protein belongs to the sugar phosphate cyclases superfamily. Dehydroquinate synthase family. The cofactor is NAD(+). It depends on Co(2+) as a cofactor. Zn(2+) is required as a cofactor.

The protein resides in the cytoplasm. It carries out the reaction 7-phospho-2-dehydro-3-deoxy-D-arabino-heptonate = 3-dehydroquinate + phosphate. Its pathway is metabolic intermediate biosynthesis; chorismate biosynthesis; chorismate from D-erythrose 4-phosphate and phosphoenolpyruvate: step 2/7. Functionally, catalyzes the conversion of 3-deoxy-D-arabino-heptulosonate 7-phosphate (DAHP) to dehydroquinate (DHQ). In Haemophilus influenzae (strain ATCC 51907 / DSM 11121 / KW20 / Rd), this protein is 3-dehydroquinate synthase.